The sequence spans 601 residues: Glutathione-regulated potassium-efflux system protein KefB (601 aa).

The next 13 membrane-spanning stretches (helical) occupy residues 4 to 24, 29 to 49, 55 to 75, 87 to 107, 115 to 135, 152 to 172, 177 to 197, 207 to 227, 230 to 250, 262 to 282, 284 to 304, 324 to 344, and 356 to 376; these read SDFL…VPLA, IGAV…GLGF, EILH…GLEL, IFGV…GLLM, AAVV…LQLM, VLLF…LLAG, HFDW…LIGG, FIAA…LVLG, LFMD…GVLL, AIDP…GMSL, LGVL…LVAV, MQFA…FSTA, and ALLL…MKLV. The 120-residue stretch at 400 to 519 folds into the RCK N-terminal domain; sequence KPQVIVVGFG…AGVTQFSRET (120 aa).

It belongs to the monovalent cation:proton antiporter 2 (CPA2) transporter (TC 2.A.37) family. KefB subfamily. Interacts with the regulatory subunit KefG.

Its subcellular location is the cell inner membrane. Pore-forming subunit of a potassium efflux system that confers protection against electrophiles. Catalyzes K(+)/H(+) antiport. This chain is Glutathione-regulated potassium-efflux system protein KefB, found in Shigella boydii serotype 18 (strain CDC 3083-94 / BS512).